The following is a 137-amino-acid chain: uncharacterized protein (137 aa).

An N-terminal signal peptide occupies residues 1-19 (MVAFYGIFLFGTVYLFGLA).

This is an uncharacterized protein from Acanthamoeba polyphaga (Amoeba).